Reading from the N-terminus, the 222-residue chain is Cytochrome b6 (222 aa).

The chain crosses the membrane as a helical span at residues 39-59; the sequence is IFYCLGGITLVCFIIQFATGF. Residue Cys42 participates in heme c binding. Residues His93 and His107 each coordinate heme b. 3 helical membrane-spanning segments follow: residues 97-117, 123-143, and 193-213; these read ASMMVLMMILHVFRVYLTGGF, LTWITGVILAVITVSFGVTGY, and LHTFVLPWFIAVFMLMHFLMI. Heme b is bound by residues His194 and His209.

Belongs to the cytochrome b family. PetB subfamily. In terms of assembly, the 4 large subunits of the cytochrome b6-f complex are cytochrome b6, subunit IV (17 kDa polypeptide, PetD), cytochrome f and the Rieske protein, while the 4 small subunits are PetG, PetL, PetM and PetN. The complex functions as a dimer. Requires heme b as cofactor. Heme c serves as cofactor.

The protein localises to the cellular thylakoid membrane. Component of the cytochrome b6-f complex, which mediates electron transfer between photosystem II (PSII) and photosystem I (PSI), cyclic electron flow around PSI, and state transitions. The protein is Cytochrome b6 of Prochlorothrix hollandica.